Reading from the N-terminus, the 394-residue chain is Elongation factor Tu (394 aa).

Residues 10 to 204 (KPHVNVGTIG…HLDTYIPEPE (195 aa)) enclose the tr-type G domain. The segment at 19–26 (GHVDHGKT) is G1. Position 19 to 26 (19 to 26 (GHVDHGKT)) interacts with GTP. Thr26 contributes to the Mg(2+) binding site. The interval 60-64 (GITIN) is G2. The segment at 81 to 84 (DCPG) is G3. GTP-binding positions include 81 to 85 (DCPGH) and 136 to 139 (NKCD). The G4 stretch occupies residues 136-139 (NKCD). Positions 174-176 (SAL) are G5.

The protein belongs to the TRAFAC class translation factor GTPase superfamily. Classic translation factor GTPase family. EF-Tu/EF-1A subfamily. As to quaternary structure, monomer.

It is found in the cytoplasm. It carries out the reaction GTP + H2O = GDP + phosphate + H(+). Functionally, GTP hydrolase that promotes the GTP-dependent binding of aminoacyl-tRNA to the A-site of ribosomes during protein biosynthesis. The protein is Elongation factor Tu of Klebsiella pneumoniae subsp. pneumoniae (strain ATCC 700721 / MGH 78578).